We begin with the raw amino-acid sequence, 228 residues long: Triosephosphate isomerase (228 aa).

A substrate-binding site is contributed by 9–11; it reads NFK. The active-site Electrophile is histidine 93. Residue glutamate 141 is the Proton acceptor of the active site. Residues isoleucine 146, glycine 181, and 202–203 contribute to the substrate site; that span reads AS.

Belongs to the triosephosphate isomerase family. Homotetramer; dimer of dimers.

It is found in the cytoplasm. It carries out the reaction D-glyceraldehyde 3-phosphate = dihydroxyacetone phosphate. The protein operates within carbohydrate biosynthesis; gluconeogenesis. Its pathway is carbohydrate degradation; glycolysis; D-glyceraldehyde 3-phosphate from glycerone phosphate: step 1/1. Its function is as follows. Involved in the gluconeogenesis. Catalyzes stereospecifically the conversion of dihydroxyacetone phosphate (DHAP) to D-glyceraldehyde-3-phosphate (G3P). The polypeptide is Triosephosphate isomerase (Pyrobaculum calidifontis (strain DSM 21063 / JCM 11548 / VA1)).